The primary structure comprises 663 residues: Putative ankyrin repeat protein R219 (663 aa).

ANK repeat units lie at residues 91–118 (FRIK…GYKV), 119–148 (DFDS…KLSS), 200–229 (ANQQ…KDGT), 258–288 (DWHV…KINP), and 322–351 (YFSH…GITV).

The sequence is that of Putative ankyrin repeat protein R219 from Acanthamoeba polyphaga mimivirus (APMV).